The sequence spans 247 residues: MIKLVLLRHGESQWNLENRFTGWHDIDLTDNGRIEASNAGRAIKEAGLTFDIAYTSVLKRAIRTLWNALDVLDLMWIPVVKSWRLNERHYGALQGLNKSETSRKYGEEQVLVWRRSYDTPPPVLDKDDERYPGTDRRYAELGEAEIPLSECLKDTVERFLPIWRDTIEPEIRKGRKVLIVAHGNSLRALVKYLDNISEEDIVGLNIPTGIPLVYELDDDLKPLKSYYLGDQEAIKQAVQAVAGQAKA.

Substrate-binding positions include 8–15 (RHGESQWN), 21–22 (TG), arginine 60, 87–90 (ERHY), lysine 98, 114–115 (RR), and 183–184 (GN). The active-site Tele-phosphohistidine intermediate is histidine 9. Glutamate 87 serves as the catalytic Proton donor/acceptor.

This sequence belongs to the phosphoglycerate mutase family. BPG-dependent PGAM subfamily.

The catalysed reaction is (2R)-2-phosphoglycerate = (2R)-3-phosphoglycerate. It participates in carbohydrate degradation; glycolysis; pyruvate from D-glyceraldehyde 3-phosphate: step 3/5. Functionally, catalyzes the interconversion of 2-phosphoglycerate and 3-phosphoglycerate. The chain is 2,3-bisphosphoglycerate-dependent phosphoglycerate mutase from Chlorobium limicola (strain DSM 245 / NBRC 103803 / 6330).